Reading from the N-terminus, the 932-residue chain is Adhesion G protein-coupled receptor E2 (932 aa).

Residues 1-15 form the signal peptide; the sequence is MWGFWLLLFWGFSGT. The Extracellular segment spans residues 16-652; that stretch reads HRWGMTTLAI…TMEFSLYIIS (637 aa). EGF-like domains follow at residues 32–69 and 81–119; these read GVNE…SNGQ and DVNE…SAGG. 11 disulfide bridges follow: cysteine 36–cysteine 48, cysteine 42–cysteine 57, cysteine 85–cysteine 98, cysteine 92–cysteine 107, cysteine 137–cysteine 149, cysteine 143–cysteine 158, cysteine 160–cysteine 171, cysteine 177–cysteine 189, cysteine 183–cysteine 198, cysteine 226–cysteine 239, and cysteine 233–cysteine 248. In terms of domain architecture, EGF-like 3; calcium-binding spans 133–172; the sequence is DVDECLTIGICPKNSNCSNSVGSYSCTCQSGFVSNGSTCE. N-linked (GlcNAc...) asparagine glycans are attached at residues asparagine 148 and asparagine 167. An EGF-like 4; calcium-binding domain is found at 173-210; sequence DEDECVTRNACPEHATCHNTLGSYYCTCNEGLEFSGGG. Residues 222-260 enclose the EGF-like 5; calcium-binding domain; it reads DVDECSRNSTLCGPSFICINTLGSYSCSCPAGFSLSTFQ. Asparagine 229 is a glycosylation site (N-linked (GlcNAc...) asparagine). Residues asparagine 269, asparagine 283, asparagine 309, asparagine 333, asparagine 344, asparagine 363, asparagine 405, asparagine 417, asparagine 474, and asparagine 499 are each glycosylated (N-linked (GlcNAc...) asparagine). Positions 272-307 constitute an EGF-like 6; calcium-binding domain; it reads DIDECDDICPSNSSCTNTLGSYFCTCHPGFASSNGQ. 2 cysteine pairs are disulfide-bonded: cysteine 276/cysteine 286 and cysteine 280/cysteine 295. In terms of domain architecture, EGF-like 7; calcium-binding spans 319–354; it reads DIDECTQDPFRCGRNSSCTNVPGSYNCSCLPDFRMD. 2 cysteine pairs are disulfide-bonded: cysteine 323–cysteine 336 and cysteine 330–cysteine 345. Positions 482 to 643 constitute a GAIN-B domain; that stretch reads EYLEIESKVI…AIIMASGELT (162 aa). The Cell attachment site signature appears at 507 to 509; it reads RGD. Intrachain disulfides connect cysteine 596-cysteine 625 and cysteine 613-cysteine 627. A GPS region spans residues 596 to 643; sequence CVSWNTDVEDGRWTPSGCETVEASETHTVCSCNRMTNLAIIMASGELT. The helical transmembrane segment at 653–673 threads the bilayer; sequence YVGTVISLVCLALAIATFLLF. The Cytoplasmic segment spans residues 674–681; that stretch reads RAVQNHNT. A helical transmembrane segment spans residues 682-702; that stretch reads YLHLHLCVCLFLAKILFLTGI. Topologically, residues 703-719 are extracellular; it reads DKTDNQTACAIIAGFLH. Asparagine 707 carries an N-linked (GlcNAc...) asparagine glycan. A helical membrane pass occupies residues 720–740; the sequence is YLFLACFFWMLVEAVMLFLMV. Residues 741-756 lie on the Cytoplasmic side of the membrane; sequence RNLKVVNYFSSRNIKM. A helical membrane pass occupies residues 757–777; sequence LHLCAFGYGLPVVVVIISATV. The Extracellular portion of the chain corresponds to 778 to 795; it reads HPWGYGMHNRCWLNTETG. The helical transmembrane segment at 796 to 816 threads the bilayer; the sequence is FIWSFLGPVCMIITINSALLA. Residues 817 to 849 lie on the Cytoplasmic side of the membrane; sequence WTLWVLRQKLCSVNSEVSKLKDTRLLTFKAIAQ. A helical membrane pass occupies residues 850–870; it reads IFILGCSWVLGIFQIGPLASI. Over 871–872 the chain is Extracellular; that stretch reads MA. Residues 873-893 traverse the membrane as a helical segment; sequence YLFTTINSLQGAFIFLIHCLL. Residues 894 to 932 lie on the Cytoplasmic side of the membrane; it reads NRQVRDEYRKLLTRKTDLSSHSQTSGILLSSMPSTSKTG.

The protein belongs to the G-protein coupled receptor 2 family. Adhesion G-protein coupled receptor (ADGR) subfamily.

The protein localises to the cell membrane. Functionally, orphan receptor involved in cell adhesion and probably in cell-cell interactions involved specifically cells of the immune system. May play a role in regulatory T-cells (Treg) development. In Rattus norvegicus (Rat), this protein is Adhesion G protein-coupled receptor E2 (Adgre1).